The primary structure comprises 549 residues: Antagonist of mitotic exit network protein 1 (549 aa).

Residues Met1–Ser11 are compositionally biased toward polar residues. The tract at residues Met1–Thr39 is disordered.

Belongs to the AMN1 family. In terms of assembly, interacts with TEM1.

It localises to the cytoplasm. The protein localises to the nucleus. In terms of biological role, negative regulator of the mitotic exit network (MEN), required for multiple cell cycle checkpoints. Acts in the daughter cell to inhibit the mitotic exit pathway once MEN has executed its function. Through its binding ability to TEM1, interferes with the TEM1-CDC5 association, required for CDC5 kinase activation and MEN activation. Required for daughter cell separation and chromosome stability. Involved in copper sensitivity. The protein is Antagonist of mitotic exit network protein 1 (AMN1) of Saccharomyces cerevisiae (strain ATCC 204508 / S288c) (Baker's yeast).